Reading from the N-terminus, the 272-residue chain is Prohibitin 1 (272 aa).

Residues 177–211 (KEFTEAVEMKQVAQQEAERARFIVEKAEQQKKAAV) adopt a coiled-coil conformation.

In terms of assembly, the mitochondrial prohibitin complex consists of two subunits (PHB1 and PHB2), assembled into a membrane-associated ring-shaped supercomplex of approximately 1 mDa.

Its subcellular location is the mitochondrion inner membrane. The protein localises to the nucleus. The protein resides in the cytoplasm. It is found in the cell membrane. Functionally, protein with pleiotropic attributes mediated in a cell-compartment- and tissue-specific manner, which include the plasma membrane-associated cell signaling functions, mitochondrial chaperone, and transcriptional co-regulator of transcription factors in the nucleus. Its function is as follows. In the mitochondria, together with PHB2, forms large ring complexes (prohibitin complexes) in the inner mitochondrial membrane (IMM) and functions as a chaperone protein that stabilizes mitochondrial respiratory enzymes and maintains mitochondrial integrity in the IMM, which is required for mitochondrial morphogenesis, neuronal survival, and normal lifespan. In terms of biological role, in the nucleus, acts as a transcription coregulator, enhances promoter binding by TP53, a transcription factor it activates, but reduces the promoter binding by E2F1, a transcription factor it represses. In the plasma membrane, cooperates with CD86 to mediate CD86-signaling in B lymphocytes that regulates the level of IgG1 produced through the activation of distal signaling intermediates. Upon CD40 engagement, required to activate NF-kappa-B signaling pathway via phospholipase C and protein kinase C activation. The protein is Prohibitin 1 (PHB1) of Gallus gallus (Chicken).